The following is a 355-amino-acid chain: Uroporphyrinogen decarboxylase (355 aa).

Substrate-binding positions include 27-31 (RQAGR), aspartate 77, tyrosine 154, threonine 209, and histidine 327.

This sequence belongs to the uroporphyrinogen decarboxylase family. In terms of assembly, homodimer.

It localises to the cytoplasm. The enzyme catalyses uroporphyrinogen III + 4 H(+) = coproporphyrinogen III + 4 CO2. Its pathway is porphyrin-containing compound metabolism; protoporphyrin-IX biosynthesis; coproporphyrinogen-III from 5-aminolevulinate: step 4/4. In terms of biological role, catalyzes the decarboxylation of four acetate groups of uroporphyrinogen-III to yield coproporphyrinogen-III. The polypeptide is Uroporphyrinogen decarboxylase (Pseudoalteromonas atlantica (strain T6c / ATCC BAA-1087)).